The sequence spans 151 residues: MFRGANAISLDAKGRLAMPSRYRDELDSRSSGQLIVTIDAVDPCLCVYPLDEWEIIETKLRALPSLREENRRLQRLLIGNAVDLELDGSGRFLVPPRLREYAKLDKRAMLVGQLNKFQLWDEDAWNAVSAADLAAIQQPGAMPDELRDLIL.

SpoVT-AbrB domains lie at alanine 5–glutamate 52 and alanine 81–alanine 124.

Belongs to the MraZ family. Forms oligomers.

It localises to the cytoplasm. It is found in the nucleoid. This chain is Transcriptional regulator MraZ, found in Pseudomonas fluorescens (strain Pf0-1).